A 1215-amino-acid polypeptide reads, in one-letter code: Protein benign gonial cell neoplasm (1215 aa).

Residues 407–439 form an ANK repeat; the sequence is TGKTAVHFASELNKANHLRLLLFMGADPYIVDL. A Phosphothreonine modification is found at Thr898.

In terms of assembly, part of a complex composed of at least mei-P26, bam, bgcn and Sxl; this complex is involved in translational repression of nanos mRNA. Interacts with bam (via C-terminus); the interaction is direct. Interacts with mei-P26; the interaction is direct and does not require bam. Weakly interacts with wh/wuho; this interaction may be required for the function or formation of the mei-P26-bgcn-bam-Sxl complex. Part of a complex composed of at least tut, bam and bgcn; complex formation does not require RNA. Interacts with tut; the interaction is indirect and is mediated by bam. As part of the bam-bgcn-tut complex associates with twin; may recruit the CCR4-NOT1 deadenylation complex to mRNA 3'UTRs to mediate post-transcriptional regulation of expression. Expressed in testis and in 5-8 germline stem cells of ovaries, immediately adjacent to terminal filament. Expressed in ovarian germline cells throughout the germarium (at protein level).

Forms a complex with tut and bam involved in 3'UTR-dependent post-transcriptional repression of several 3'-RNA processing factors, which promotes germline stem cell lineage differentiation and mitosis-to-meiosis transition. Part of a complex with bam involved in 3'-UTR-dependent translational repression of a subset of mRNAs, including those for mei-P26, nanos and shg/E-cadherin; may act as a promiscuous RNA-binding protein tethering bam to its target mRNAs. Required for regulating the progression of gonialblast cells through transit amplification and differentiation into gametes. The chain is Protein benign gonial cell neoplasm from Drosophila melanogaster (Fruit fly).